The sequence spans 216 residues: Orotate phosphoribosyltransferase (216 aa).

A 5-phospho-alpha-D-ribose 1-diphosphate-binding site is contributed by Lys30. 38–39 (FF) lines the orotate pocket. 5-phospho-alpha-D-ribose 1-diphosphate contacts are provided by residues 75–76 (YK), Arg102, Lys103, Lys106, His108, and 128–136 (DDVITAGTA). Positions 132 and 160 each coordinate orotate.

It belongs to the purine/pyrimidine phosphoribosyltransferase family. PyrE subfamily. As to quaternary structure, homodimer. Mg(2+) is required as a cofactor.

The enzyme catalyses orotidine 5'-phosphate + diphosphate = orotate + 5-phospho-alpha-D-ribose 1-diphosphate. It participates in pyrimidine metabolism; UMP biosynthesis via de novo pathway; UMP from orotate: step 1/2. Catalyzes the transfer of a ribosyl phosphate group from 5-phosphoribose 1-diphosphate to orotate, leading to the formation of orotidine monophosphate (OMP). This is Orotate phosphoribosyltransferase from Acinetobacter baumannii (strain ACICU).